A 223-amino-acid polypeptide reads, in one-letter code: Serine/threonine/tyrosine-interacting protein A (223 aa).

The 149-residue stretch at 28–176 folds into the Tyrosine-protein phosphatase domain; the sequence is EMQEILPGLF…LQEYEAIYLA (149 aa).

It belongs to the protein-tyrosine phosphatase family. Non-receptor class subfamily.

Its function is as follows. Catalytically inactive phosphatase. This Xenopus laevis (African clawed frog) protein is Serine/threonine/tyrosine-interacting protein A (styx-a).